A 198-amino-acid chain; its full sequence is Putative NADH dehydrogenase/NAD(P)H nitroreductase XOO4267 (198 aa).

It belongs to the nitroreductase family. HadB/RutE subfamily. The cofactor is FMN.

This chain is Putative NADH dehydrogenase/NAD(P)H nitroreductase XOO4267, found in Xanthomonas oryzae pv. oryzae (strain KACC10331 / KXO85).